The following is a 165-amino-acid chain: Large ribosomal subunit protein uL10 (165 aa).

The protein belongs to the universal ribosomal protein uL10 family. Part of the ribosomal stalk of the 50S ribosomal subunit. The N-terminus interacts with L11 and the large rRNA to form the base of the stalk. The C-terminus forms an elongated spine to which L12 dimers bind in a sequential fashion forming a multimeric L10(L12)X complex.

Functionally, forms part of the ribosomal stalk, playing a central role in the interaction of the ribosome with GTP-bound translation factors. This Buchnera aphidicola subsp. Schizaphis graminum (strain Sg) protein is Large ribosomal subunit protein uL10.